Consider the following 226-residue polypeptide: Ribose-5-phosphate isomerase A (226 aa).

Substrate-binding positions include 29 to 32, 84 to 87, and 97 to 100; these read TGST, DGAD, and KGGG. Glutamate 106 acts as the Proton acceptor in catalysis. Residue lysine 124 coordinates substrate.

Belongs to the ribose 5-phosphate isomerase family. In terms of assembly, homodimer.

The enzyme catalyses aldehydo-D-ribose 5-phosphate = D-ribulose 5-phosphate. It participates in carbohydrate degradation; pentose phosphate pathway; D-ribose 5-phosphate from D-ribulose 5-phosphate (non-oxidative stage): step 1/1. Its function is as follows. Catalyzes the reversible conversion of ribose-5-phosphate to ribulose 5-phosphate. The chain is Ribose-5-phosphate isomerase A from Methanothermobacter thermautotrophicus (strain ATCC 29096 / DSM 1053 / JCM 10044 / NBRC 100330 / Delta H) (Methanobacterium thermoautotrophicum).